Here is a 607-residue protein sequence, read N- to C-terminus: Large ribosomal subunit assembly factor BipA (607 aa).

Positions 3-198 (EKLRNIAIIA…AIVDHVPAPD (196 aa)) constitute a tr-type G domain. GTP is bound by residues 15-20 (DHGKTT) and 128-131 (NKVD).

The protein belongs to the TRAFAC class translation factor GTPase superfamily. Classic translation factor GTPase family. BipA subfamily. Monomer.

The protein localises to the cytoplasm. The enzyme catalyses GTP + H2O = GDP + phosphate + H(+). Its function is as follows. A 50S ribosomal subunit assembly protein with GTPase activity, required for 50S subunit assembly at low temperatures, may also play a role in translation. Binds GTP and analogs. Binds the 70S ribosome between the 30S and 50S subunits, in a similar position as ribosome-bound EF-G; it contacts a number of ribosomal proteins, both rRNAs and the A-site tRNA. This chain is Large ribosomal subunit assembly factor BipA, found in Shigella flexneri.